We begin with the raw amino-acid sequence, 252 residues long: Imidazole glycerol phosphate synthase subunit HisF (252 aa).

Catalysis depends on residues Asp-11 and Asp-130.

The protein belongs to the HisA/HisF family. In terms of assembly, heterodimer of HisH and HisF.

The protein resides in the cytoplasm. It catalyses the reaction 5-[(5-phospho-1-deoxy-D-ribulos-1-ylimino)methylamino]-1-(5-phospho-beta-D-ribosyl)imidazole-4-carboxamide + L-glutamine = D-erythro-1-(imidazol-4-yl)glycerol 3-phosphate + 5-amino-1-(5-phospho-beta-D-ribosyl)imidazole-4-carboxamide + L-glutamate + H(+). It functions in the pathway amino-acid biosynthesis; L-histidine biosynthesis; L-histidine from 5-phospho-alpha-D-ribose 1-diphosphate: step 5/9. Functionally, IGPS catalyzes the conversion of PRFAR and glutamine to IGP, AICAR and glutamate. The HisF subunit catalyzes the cyclization activity that produces IGP and AICAR from PRFAR using the ammonia provided by the HisH subunit. The chain is Imidazole glycerol phosphate synthase subunit HisF from Bacillus cytotoxicus (strain DSM 22905 / CIP 110041 / 391-98 / NVH 391-98).